Here is a 200-residue protein sequence, read N- to C-terminus: Transcription factor FapR (200 aa).

It belongs to the FapR family.

In terms of biological role, transcriptional factor involved in regulation of membrane lipid biosynthesis by repressing genes involved in fatty acid and phospholipid metabolism. The polypeptide is Transcription factor FapR (Thermoanaerobacter pseudethanolicus (strain ATCC 33223 / 39E) (Clostridium thermohydrosulfuricum)).